The chain runs to 127 residues: MYRTMMAGKLHRATVTEANLNYVGSITIDEDLLDAVGMLANEKVQIVNNNNGARLETYIIPGKRGSGVICLNGAAARLVQEGDKVIIISYQMMSDQEAKSHQPKVAVLDDQNKIEQMLGQEPAHTIL.

Ser-25 acts as the Schiff-base intermediate with substrate; via pyruvic acid in catalysis. Position 25 is a pyruvic acid (Ser) (Ser-25). Position 57 (Thr-57) interacts with substrate. Tyr-58 functions as the Proton donor in the catalytic mechanism. Position 73–75 (73–75) interacts with substrate; the sequence is GAA.

The protein belongs to the PanD family. Heterooctamer of four alpha and four beta subunits. Requires pyruvate as cofactor. Is synthesized initially as an inactive proenzyme, which is activated by self-cleavage at a specific serine bond to produce a beta-subunit with a hydroxyl group at its C-terminus and an alpha-subunit with a pyruvoyl group at its N-terminus.

It is found in the cytoplasm. The catalysed reaction is L-aspartate + H(+) = beta-alanine + CO2. The protein operates within cofactor biosynthesis; (R)-pantothenate biosynthesis; beta-alanine from L-aspartate: step 1/1. Its function is as follows. Catalyzes the pyruvoyl-dependent decarboxylation of aspartate to produce beta-alanine. This chain is Aspartate 1-decarboxylase, found in Bacillus velezensis (strain DSM 23117 / BGSC 10A6 / LMG 26770 / FZB42) (Bacillus amyloliquefaciens subsp. plantarum).